The primary structure comprises 214 residues: 3,4-dihydroxy-2-butanone 4-phosphate synthase (214 aa).

D-ribulose 5-phosphate-binding positions include 37 to 38 (RE), aspartate 42, 150 to 154 (RRGHT), and glutamate 174. A Mg(2+)-binding site is contributed by glutamate 38. Mg(2+) is bound at residue histidine 153.

It belongs to the DHBP synthase family. As to quaternary structure, homodimer. Mg(2+) serves as cofactor. Requires Mn(2+) as cofactor.

It carries out the reaction D-ribulose 5-phosphate = (2S)-2-hydroxy-3-oxobutyl phosphate + formate + H(+). The protein operates within cofactor biosynthesis; riboflavin biosynthesis; 2-hydroxy-3-oxobutyl phosphate from D-ribulose 5-phosphate: step 1/1. Its function is as follows. Catalyzes the conversion of D-ribulose 5-phosphate to formate and 3,4-dihydroxy-2-butanone 4-phosphate. The sequence is that of 3,4-dihydroxy-2-butanone 4-phosphate synthase from Histophilus somni (strain 2336) (Haemophilus somnus).